Consider the following 151-residue polypeptide: 3-dehydroquinate dehydratase 1 (151 aa).

Tyr-23 acts as the Proton acceptor in catalysis. Substrate-binding residues include Asn-75, His-81, and Asp-88. The Proton donor role is filled by His-101. Substrate is bound by residues 102–103 (LS) and Arg-112.

It belongs to the type-II 3-dehydroquinase family. In terms of assembly, homododecamer.

It catalyses the reaction 3-dehydroquinate = 3-dehydroshikimate + H2O. Its pathway is metabolic intermediate biosynthesis; chorismate biosynthesis; chorismate from D-erythrose 4-phosphate and phosphoenolpyruvate: step 3/7. Catalyzes a trans-dehydration via an enolate intermediate. The polypeptide is 3-dehydroquinate dehydratase 1 (aroQ1) (Pseudomonas putida (strain ATCC 47054 / DSM 6125 / CFBP 8728 / NCIMB 11950 / KT2440)).